The sequence spans 94 residues: Alpha-conotoxin Ms20.3 (94 aa).

Residues 1–24 (MPKLAVVLLVLLILPLSYFDAAGG) form the signal peptide. Positions 25–45 (QVVQGDRRGNGLARYLQRGDR) are excised as a propeptide. Glutamate 49 is modified (4-carboxyglutamate). Proline 55 bears the 4-hydroxyproline mark. Intrachain disulfides connect cysteine 63/cysteine 72, cysteine 68/cysteine 80, cysteine 73/cysteine 90, and cysteine 78/cysteine 92.

The protein belongs to the conotoxin D superfamily. As to quaternary structure, hetero-, homo- or pseudo-homodimer (identical sequence, different post-translational modifications). Homodimer of [carboxyGlu-49, hydroxyPro-55]Ms20.3, and heterodimer of [carboxyGlu-49, hydroxyPro-55]Ms20.3 and [carboxy'Glu-50', hydroxy'Pro-56']Ms20.5 may exist. As to expression, expressed by the venom duct.

The protein resides in the secreted. Functionally, alpha-D-conopeptides act on postsynaptic membranes, they bind to the nicotinic acetylcholine receptors (nAChR) and thus inhibit them. Through its two C-terminal domains, this homodimeric protein would bind to two nAChR allosteric sites, located outside the nAChR C-loop of the principal binding face and at the adjacent binding interface in a clockwise direction. This toxin specifically blocks mammalian neuronal nAChR of the alpha-7/CHRNA7 (IC(50)=0.12 nM), alpha-3-beta-2/CHRNA3-CHRNB2 (IC(50)=1.08 nM), and alpha-4-beta-2/CHRNA4-CHRNB2 (IC(50)=4.5 nM) subtypes. Has no effect on alpha-3-beta-4/CHRNA3-CHRNB4, alpha-4-beta-4/CHRNA4-CHRNB4 and alpha-1-beta-1-epsilon-delta/CHRNA1-CHRNB1-CHRNE-CHRND subtypes of nAChRs. This is Alpha-conotoxin Ms20.3 from Conus mustelinus (Weasel cone).